Consider the following 365-residue polypeptide: Ribosomal RNA large subunit methyltransferase F (365 aa).

2 stretches are compositionally biased toward low complexity: residues 1 to 18 (MPKP…SPAG) and 30 to 42 (AKLK…AASK). The tract at residues 1–50 (MPKPAIKTAAKPATSPAGKRAKPNTPQSVAKLKASTAKAASKPKAKLGEK) is disordered.

This sequence belongs to the methyltransferase superfamily. METTL16/RlmF family.

The protein localises to the cytoplasm. The catalysed reaction is adenosine(1618) in 23S rRNA + S-adenosyl-L-methionine = N(6)-methyladenosine(1618) in 23S rRNA + S-adenosyl-L-homocysteine + H(+). Functionally, specifically methylates the adenine in position 1618 of 23S rRNA. In Shewanella oneidensis (strain ATCC 700550 / JCM 31522 / CIP 106686 / LMG 19005 / NCIMB 14063 / MR-1), this protein is Ribosomal RNA large subunit methyltransferase F.